The chain runs to 448 residues: Cysteine--tRNA ligase (448 aa).

C29 serves as a coordination point for Zn(2+). The 'HIGH' region signature appears at 31 to 41; the sequence is PTVYNYIHIGN. Residues C212, H237, and E241 each contribute to the Zn(2+) site. Residues 269–273 carry the 'KMSKS' region motif; that stretch reads KMSKS. K272 provides a ligand contact to ATP.

Belongs to the class-I aminoacyl-tRNA synthetase family. As to quaternary structure, monomer. Zn(2+) serves as cofactor.

The protein localises to the cytoplasm. It catalyses the reaction tRNA(Cys) + L-cysteine + ATP = L-cysteinyl-tRNA(Cys) + AMP + diphosphate. The sequence is that of Cysteine--tRNA ligase from Streptococcus equi subsp. zooepidemicus (strain MGCS10565).